Here is a 377-residue protein sequence, read N- to C-terminus: MKSVGLITEYNPFHNGHLFHATLSKQRSETNVTIAIMSGNFVMRGEPAIYHKFKRTEMALSAVDLVVELPLIGSLSSSDTFAEIAIKTAQYLDIDIISFGSESASLKDLQYLATQMIDYEKHPDFKEKLKQGKSYPRILSELTHNDTLLQSPNNILGISYLKAMQQFAPHMSALTIKREGSLHHQKVIDHHHFASGTSIRRSLMNDNVDWKNVVPNQIQSLYCKPHTTVEDTFPFIKHQLITQPKESLHSIYTINEGFENRLQTMIHRSDSFESLLSNLKTKRYTQTYIQRVLMNVLLNITKDDVNKEINAVRVLGMSEKGRSYLKYLKANYPNRHYITNVNQKTAHYFKNEIKATHVYNLLSNQSQTDFNTPLVRI.

Residues 7–20, Gly-100, Asn-153, and Arg-178 each bind ATP; that span reads ITEY…HLFH.

This sequence belongs to the TmcAL family.

The protein resides in the cytoplasm. It catalyses the reaction cytidine(34) in elongator tRNA(Met) + acetate + ATP = N(4)-acetylcytidine(34) in elongator tRNA(Met) + AMP + diphosphate. Its function is as follows. Catalyzes the formation of N(4)-acetylcytidine (ac(4)C) at the wobble position of elongator tRNA(Met), using acetate and ATP as substrates. First activates an acetate ion to form acetyladenylate (Ac-AMP) and then transfers the acetyl group to tRNA to form ac(4)C34. This Staphylococcus epidermidis (strain ATCC 12228 / FDA PCI 1200) protein is tRNA(Met) cytidine acetate ligase.